The chain runs to 354 residues: MSYGSCVSRLLRTRVQSVLKKSVHSVAVIGAPFSQGQKRKGVECGPAAIRDAGLVKRLSDLGCRLKDYGDLSFTPVPKDDLYNNLIVNPRSVGLANQELAEVVNRAVSGGYSCVTVGGDHSLAIGTISGHARHCPDLCVVWVDAHADINTPLTTSSGNLHGQPVSFLLRELQDKVPQLPGFSWIKPCISSPSIVYIGLRDVDPPEHFILKKYDIQYFSMRDIDRLGIQKVMEQTFDLLIGKKQRPIHLSFDIDAFDPTLAPATGTPGCGGADLSRRMYISEEIHNTGLLSALDLVEVNPRLAASDEEAKATASLAVDVIASSFGQTREGGHTVYEQLPPPSSPHESENAERVRI.

Residues 1-22 (MSYGSCVSRLLRTRVQSVLKKS) constitute a mitochondrion transit peptide. Histidine 120, aspartate 143, histidine 145, and aspartate 147 together coordinate Mn(2+). Residues 145 to 149 (HADIN), 156 to 158 (SGN), and aspartate 202 each bind substrate. The Mn(2+) site is built by aspartate 251 and aspartate 253. Residues threonine 265 and glutamate 296 each contribute to the substrate site. A disordered region spans residues 330-354 (GHTVYEQLPPPSSPHESENAERVRI). A compositionally biased stretch (basic and acidic residues) spans 344–354 (HESENAERVRI).

Belongs to the arginase family. Homotrimer. The cofactor is Mn(2+).

The protein localises to the mitochondrion. The catalysed reaction is L-arginine + H2O = urea + L-ornithine. It functions in the pathway nitrogen metabolism; urea cycle; L-ornithine and urea from L-arginine: step 1/1. Functionally, may play a role in the regulation of extra-urea cycle arginine metabolism and also in down-regulation of nitric oxide synthesis. Extrahepatic arginase functions to regulate L-arginine bioavailability to nitric oxid synthase (NOS). Arginine metabolism is a critical regulator of innate and adaptive immune responses. Seems to be involved in negative regulation of the survival capacity of activated T cells. May suppress inflammation-related signaling in asthmatic airway epithelium. May play a role in promoting prenatal immune suppression. Regulates RPS6KB1 signaling, which promotes endothelial cell senescence and inflammation and implicates NOS3/eNOS dysfunction. Can inhibit endothelial autophagy independently of its enzymatic activity implicating mTORC2 signaling. Involved in vascular smooth muscle cell senescence and apoptosis independently of its enzymatic activity. This chain is Arginase-2, mitochondrial (ARG2), found in Oryctolagus cuniculus (Rabbit).